Reading from the N-terminus, the 892-residue chain is Putative disease resistance protein At4g10780 (892 aa).

Residues 24 to 63 (SLGNYIHKLKDNIVALEKAIEDLTATRDDVLRRVQMEEGK) adopt a coiled-coil conformation. One can recognise an NB-ARC domain in the interval 137–440 (IVAAPAPKLE…ICEGFIDGNI (304 aa)). Residue 180 to 187 (GMGGVGKT) coordinates ATP. LRR repeat units lie at residues 515 to 536 (AVRR…PECP), 537 to 559 (ELTT…FFRH), 562 to 584 (KLVV…ISEL), 586 to 608 (ALRY…QDLK), 609 to 631 (TLIH…SKLS), and 632 to 654 (SLRT…KELH).

It belongs to the disease resistance NB-LRR family.

Potential disease resistance protein. In Arabidopsis thaliana (Mouse-ear cress), this protein is Putative disease resistance protein At4g10780.